The sequence spans 333 residues: MFNLKNRNFLTLMDFTPKEINYFLDLARDLKRAKYTGTEVQRMKGKNIALIFEKASTRTRCAFEVGAKDQGAHVTYLGPTGSHIGKKESAADTARVLGRMYDGIEYRGFGQEIVETLAEYAGVPVWNGLTDEDHPTQILADFLTIREHFNKPLSEIKFAYVGDGANNMANALMIGAVKMGMDFRIVSPKEIPTDATLVAKCKEIAAETGAKVTITDNIEEGVKGCDVLYTDVWVSMGEPDSVWESKIKLLTPYRVDMNMIKMTGNPDAKFMHCLPAFHDEETAVGKEIKEKYGLSEMEVSHELFESKYSIVFDEAENRMHTIKAVMVATLGDQ.

Carbamoyl phosphate-binding positions include 56-59 (STRT), Arg107, and 134-137 (HPTQ). L-ornithine contacts are provided by residues Asn167, Asp231, and 235–236 (SM). Carbamoyl phosphate is bound by residues 273 to 274 (CL) and Arg318.

It belongs to the aspartate/ornithine carbamoyltransferase superfamily. OTCase family.

It is found in the cytoplasm. The enzyme catalyses carbamoyl phosphate + L-ornithine = L-citrulline + phosphate + H(+). It functions in the pathway amino-acid degradation; L-arginine degradation via ADI pathway; carbamoyl phosphate from L-arginine: step 2/2. Its function is as follows. Reversibly catalyzes the transfer of the carbamoyl group from carbamoyl phosphate (CP) to the N(epsilon) atom of ornithine (ORN) to produce L-citrulline. The sequence is that of Ornithine carbamoyltransferase from Clostridium botulinum (strain Langeland / NCTC 10281 / Type F).